A 525-amino-acid chain; its full sequence is NAD(P)H-quinone oxidoreductase subunit 2 (525 aa).

Transmembrane regions (helical) follow at residues 14-34 (AIWP…VDLV), 42-62 (SLPA…VLQW), 78-98 (PVSI…VMMA), 117-137 (LTAT…MVFV), 167-187 (LLTG…LYGL), 201-221 (LANA…GIGF), 240-260 (PTPV…ALAI), 276-296 (AVLS…AIAQ), 302-322 (LLAY…VAGT), 330-350 (IFYL…VTLF), 374-394 (LCLS…GFFG), 396-416 (LYLF…VGLV), 462-482 (VGMV…NPLF), and 494-514 (FLGF…SLAV).

Belongs to the complex I subunit 2 family. In terms of assembly, NDH-1 can be composed of about 15 different subunits; different subcomplexes with different compositions have been identified which probably have different functions.

It localises to the cellular thylakoid membrane. The catalysed reaction is a plastoquinone + NADH + (n+1) H(+)(in) = a plastoquinol + NAD(+) + n H(+)(out). It carries out the reaction a plastoquinone + NADPH + (n+1) H(+)(in) = a plastoquinol + NADP(+) + n H(+)(out). Its function is as follows. NDH-1 shuttles electrons from an unknown electron donor, via FMN and iron-sulfur (Fe-S) centers, to quinones in the respiratory and/or the photosynthetic chain. The immediate electron acceptor for the enzyme in this species is believed to be plastoquinone. Couples the redox reaction to proton translocation, and thus conserves the redox energy in a proton gradient. Cyanobacterial NDH-1 also plays a role in inorganic carbon-concentration. This chain is NAD(P)H-quinone oxidoreductase subunit 2, found in Synechococcus sp. (strain JA-3-3Ab) (Cyanobacteria bacterium Yellowstone A-Prime).